The primary structure comprises 313 residues: Formimidoylglutamase (313 aa).

6 residues coordinate Mn(2+): His130, Asp155, His157, Asp159, Asp241, and Asp243.

The protein belongs to the arginase family. Mn(2+) is required as a cofactor.

The enzyme catalyses N-formimidoyl-L-glutamate + H2O = formamide + L-glutamate. It functions in the pathway amino-acid degradation; L-histidine degradation into L-glutamate; L-glutamate from N-formimidoyl-L-glutamate (hydrolase route): step 1/1. Functionally, catalyzes the conversion of N-formimidoyl-L-glutamate to L-glutamate and formamide. In Salmonella paratyphi B (strain ATCC BAA-1250 / SPB7), this protein is Formimidoylglutamase.